The chain runs to 365 residues: DNA replication and repair protein RecF (365 aa).

Gly30 to Thr37 serves as a coordination point for ATP.

It belongs to the RecF family.

The protein localises to the cytoplasm. The RecF protein is involved in DNA metabolism; it is required for DNA replication and normal SOS inducibility. RecF binds preferentially to single-stranded, linear DNA. It also seems to bind ATP. The sequence is that of DNA replication and repair protein RecF from Geobacter sulfurreducens (strain ATCC 51573 / DSM 12127 / PCA).